The chain runs to 347 residues: MKEESELARIKSSKAVVSKTIKEGKQGRKIPIWLMRQAGRSLPEYRRAVKDTSSFMEICYNTDLVVELTLQPVARFSMDAAIIFSDILIVADVLGCDVDFIRGVGPTIKPVKNFKELRNPQKIETKTLPILNAIRKVRDKLPEEKSLIGFAGGPWTVASYIIEGRSSKTFSKVLNLHPSSLEQIIEQITEVTISYLVKQIEFGADVIQLFDSNAGVLSGELFEECVIKPTKKIVSAIKGKFPDFPIIGFPKSAGSLYKDYCEKTGVSAVSIDYNVPIEWAKENLKIPLQGNLNPSLLAYNKMEAIKETKRIIDCFRDLPFIFNLGHGVLPNTPIENIAALVDLVKSQ.

Substrate contacts are provided by residues 36-40 (RQAGR), Asp-86, Tyr-160, Ser-212, and His-326.

The protein belongs to the uroporphyrinogen decarboxylase family. In terms of assembly, homodimer.

It is found in the cytoplasm. It carries out the reaction uroporphyrinogen III + 4 H(+) = coproporphyrinogen III + 4 CO2. It functions in the pathway porphyrin-containing compound metabolism; protoporphyrin-IX biosynthesis; coproporphyrinogen-III from 5-aminolevulinate: step 4/4. Its function is as follows. Catalyzes the decarboxylation of four acetate groups of uroporphyrinogen-III to yield coproporphyrinogen-III. In Wolbachia sp. subsp. Brugia malayi (strain TRS), this protein is Uroporphyrinogen decarboxylase.